We begin with the raw amino-acid sequence, 887 residues long: Pyruvate dehydrogenase E1 component (887 aa).

In terms of assembly, homodimer. Part of the PDH complex, consisting of multiple copies of pyruvate dehydrogenase (E1), dihydrolipoamide acetyltransferase (E2) and lipoamide dehydrogenase (E3). Thiamine diphosphate is required as a cofactor.

It carries out the reaction N(6)-[(R)-lipoyl]-L-lysyl-[protein] + pyruvate + H(+) = N(6)-[(R)-S(8)-acetyldihydrolipoyl]-L-lysyl-[protein] + CO2. Functionally, component of the pyruvate dehydrogenase (PDH) complex, that catalyzes the overall conversion of pyruvate to acetyl-CoA and CO(2). The protein is Pyruvate dehydrogenase E1 component (aceE) of Buchnera aphidicola subsp. Baizongia pistaciae (strain Bp).